We begin with the raw amino-acid sequence, 238 residues long: UPF0280 protein Msm_0088 (238 aa).

The protein belongs to the UPF0280 family.

The sequence is that of UPF0280 protein Msm_0088 from Methanobrevibacter smithii (strain ATCC 35061 / DSM 861 / OCM 144 / PS).